The following is a 901-amino-acid chain: MNIAKSIHFLSNKEALDKRLDRGLLGIRGRQADELSSLGLPVLPSVVIDATVSRSLYGEKLRSALSPYLRKFTLLNRKEYADAKNPMLLKVVLSPNLAISNYPVLHNFGLTRDTFAGFAERVGEHFATHEVFFLLKGVFGVLLGIAESEENTKGASEFVETLKEIEVFLQGGKSSPSGREAMNRYRALLPDGFFDDAYVQLEEAVRLVSKLLSFEEDGEDGVAILIQPMVYGNYGGGSYSGRFFSRNIITGEKKLQGQYFEERFDECDAEGSDVNAIKPAYLKQLQDIAWKLEDHSREIREVRFTIEAGSLWLIEQKPVEAKSTISLVRLLLDLYEREVVDAEYVVKSVKPGQLNEILHPVIDMTSVTGLKSSQGGIIGVPGAAVGRVYFTADSLIEAWRVAKMGGQDTRCILCMPATYAGDVKAIEVATGVLSNEGGYSAHASVVARQYGKISLVRPDMKIYSDKAVVDGMTINEGDFVTLNVPYYGESTLYMGAAQLIEPDPETSGLVSFIELAKGFVRSFHVRANADSPHDAELALAFGAQGIGLCRTEHMFFKEDRINVFRRMIFSENAEERTGSLKQLQKMQGEDFYGIFKVMQGHEVTIRLLDAPLHEFLPHGESEVSKFLEYLEKVCGKGLSREELQERISMLSEVNPMLGHRGCRIAISYPEIYAMQVRAVFEAVYRLQKEKISVYPEIMIPIVMNCRELKQIVYGKKIEGHAYQGIGSIEEEVRLALKAKEVDYKVGAMIELPAAALSADEIARYAQFFSFGTNDLTQTTLGLSRDDFNTFMPDYTMYDLVDGNPFAILDARVRELIEVAMQRGRLARPDIQLGLCGEHGSRSENIRFCMEVGLDYVSCSSYSVPIALLAIAQAEIENAEKEGRKPAWRGRSSAKSGGRRAR.

The segment at 1–321 is N-terminal; sequence MNIAKSIHFL…WLIEQKPVEA (321 aa). The tract at residues 322 to 380 is linker 1; the sequence is KSTISLVRLLLDLYEREVVDAEYVVKSVKPGQLNEILHPVIDMTSVTGLKSSQGGIIGV. The interval 381 to 482 is central; it reads PGAAVGRVYF…TINEGDFVTL (102 aa). The residue at position 440 (serine 440) is a Phosphoserine; by PDRP1. The active-site Tele-phosphohistidine intermediate is histidine 442. The tract at residues 483–522 is linker 2; sequence NVPYYGESTLYMGAAQLIEPDPETSGLVSFIELAKGFVRS. Residues 523–901 form a C-terminal region; sequence FHVRANADSP…SAKSGGRRAR (379 aa). Substrate is bound by residues arginine 550, arginine 606, glutamate 750, glycine 771, threonine 772, asparagine 773, and aspartate 774. Mg(2+) is bound at residue glutamate 750. Residue aspartate 774 coordinates Mg(2+). The active-site Proton donor is the cysteine 835. Residues 879–901 form a disordered region; that stretch reads EKEGRKPAWRGRSSAKSGGRRAR.

It belongs to the PEP-utilizing enzyme family. Homodimer. The cofactor is Mg(2+). In terms of processing, phosphorylation of Ser-440 in the dark inactivates the enzyme. Dephosphorylation upon light stimulation reactivates the enzyme.

It catalyses the reaction pyruvate + phosphate + ATP = phosphoenolpyruvate + AMP + diphosphate + H(+). Its activity is regulated as follows. Activated by light-induced dephosphorylation. Inhibited by dark-induced phosphorylation. Both reactions are catalyzed by PDRP1. Catalyzes the reversible phosphorylation of pyruvate and phosphate. The chain is Pyruvate, phosphate dikinase (ppdK) from Treponema pallidum (strain Nichols).